Consider the following 202-residue polypeptide: IMP cyclohydrolase (202 aa).

Positions 29–52 (VQRDGTVTVEPTPDAPETDNPYIS) are disordered.

Belongs to the archaeal IMP cyclohydrolase family.

The enzyme catalyses IMP + H2O = 5-formamido-1-(5-phospho-D-ribosyl)imidazole-4-carboxamide. It functions in the pathway purine metabolism; IMP biosynthesis via de novo pathway; IMP from 5-formamido-1-(5-phospho-D-ribosyl)imidazole-4-carboxamide: step 1/1. Its function is as follows. Catalyzes the cyclization of 5-formylamidoimidazole-4-carboxamide ribonucleotide to IMP. This is IMP cyclohydrolase from Haloarcula marismortui (strain ATCC 43049 / DSM 3752 / JCM 8966 / VKM B-1809) (Halobacterium marismortui).